A 159-amino-acid polypeptide reads, in one-letter code: Allergen Arg r 1 (159 aa).

Positions 1 to 16 are cleaved as a signal peptide; the sequence is MALIILLVACLSVVSA. Intrachain disulfides connect Cys-50-Cys-155 and Cys-109-Cys-134.

Belongs to the calycin superfamily. Histamine-binding salivary protein family. In terms of processing, not glycosylated.

It is found in the secreted. In Argas reflexus (European pigeon tick), this protein is Allergen Arg r 1.